The chain runs to 363 residues: Peroxidase (363 aa).

The N-terminal stretch at 1–20 (MKLSLLSTFAAVIIGALALP) is a signal peptide. Residue Q21 is modified to Pyrrolidone carboxylic acid. 4 disulfides stabilise this stretch: C31–C43, C42–C312, C62–C148, and C276–C341. H75 serves as the catalytic Proton acceptor. Positions 76, 94, 96, and 98 each coordinate Ca(2+). N162 carries N-linked (GlcNAc...) (high mannose) asparagine glycosylation. Residue H203 coordinates heme b. S204, D221, T223, V226, and D228 together coordinate Ca(2+). An O-linked (Man...) serine glycan is attached at S358.

It belongs to the peroxidase family. Ligninase subfamily. Requires Ca(2+) as cofactor. Heme b serves as cofactor.

The protein localises to the secreted. It carries out the reaction 2 a phenolic donor + H2O2 = 2 a phenolic radical donor + 2 H2O. This Coprinopsis cinerea (strain Okayama-7 / 130 / ATCC MYA-4618 / FGSC 9003) (Inky cap fungus) protein is Peroxidase (CIP1).